The chain runs to 559 residues: Large neutral amino acids transporter small subunit 3 (559 aa).

The chain crosses the membrane as a helical span at residues 20–40 (VLENLFFSAVLLGWGSLLIIL). The N-linked (GlcNAc...) asparagine glycan is linked to asparagine 57. 5 helical membrane passes run 78-98 (LGFT…GILM), 105-124 (PVRL…MALA), 131-151 (LSPL…CLTF), 168-188 (MALM…IKLI), and 191-211 (AGVA…LIFL). 2 N-linked (GlcNAc...) asparagine glycosylation sites follow: asparagine 212 and asparagine 229. Phosphoserine occurs at positions 237, 262, and 267. 6 helical membrane passes run 304 to 324 (FLWS…YMAA), 357 to 377 (SVFG…GYIM), 419 to 439 (AISA…TCLI), 446 to 466 (FVTF…CGSL), 485 to 505 (LISA…VGPL), and 510 to 530 (FWVN…PSYL).

The protein belongs to the SLC43A transporter (TC 2.A.1.44) family. Ubiquitously expressed in fetus and adult. Highest expression in adult pancreas, liver, skeletal muscle. In fetus, highest expression in liver and lower levels in kidney, and lung. Exclusively expressed in the glomeruli along the glomerular capillary walls.

It localises to the cell membrane. The protein localises to the apical cell membrane. It is found in the endoplasmic reticulum membrane. It catalyses the reaction D-leucine(in) = D-leucine(out). It carries out the reaction L-leucine(in) = L-leucine(out). The enzyme catalyses L-isoleucine(in) = L-isoleucine(out). The catalysed reaction is L-methionine(in) = L-methionine(out). It catalyses the reaction L-phenylalanine(in) = L-phenylalanine(out). It carries out the reaction L-valine(in) = L-valine(out). Functionally, uniport that mediates the transport of neutral amino acids such as L-leucine, L-isoleucine, L-valine, and L-phenylalanine. The transport activity is sodium ions-independent, electroneutral and mediated by a facilitated diffusion. The chain is Large neutral amino acids transporter small subunit 3 from Homo sapiens (Human).